The following is a 1214-amino-acid chain: MRAGRCAAALLLLLLSGAGRAIGSEDIVVGCGGFVKSDVEINYSLIEIKLYTKHGTLKYQTDCAPNNGYFMIPLYDKGDFILKIEPPLGWSFEPTNVELRVDGVSDICTKGGDINFLFTGFSVNGKVLSKGQPLGPAGVQVSLRSTGADSKIQSTVTQPGGKFAFFKVLPGDYEILATHPTWALKEASTTVRVTNSNANAAGPLIVAGYNVSGSVRSDGEPMKGVKFLLFSSLVNKEDVLGCNVSPVSGFQPPDESLVYLCYAVSKEDGSFSFYSLPSGGYTVVPFYRGERITFDVAPSRLDFTVEHDSLRIEPVFHVMGFSVTGRVLNGPDGEGVPEAVVTLNNQIKVKTKADGSFRLENITTGTYTIHAQKEHLYFEMVTIKIAPNTPQLADLIATGFSICGQIAIVRSPDTIKQMSKYRVVLSSQDKDKALLTVDSDAHGSFCFKAKPGAYKVQVVVPEAETRAGLMLKPQVFPLTVTNRPVMDVAFVQFLASVSGKVSCLDTCGDLLVTLQSLSRQGEKRSLQLSGKVNSMTFTFDKVLPGRYKISIMHEDWCWRNKSLEVEVLEDDVSAVEFRQTGYMLRCALSHAITLEFHQDGNGPENVGIYNLSRGVNRFCLSKPGVYKVTPRSCHRFEQAFYTYDTSSPSILTLTAIRHHVLGTIITDKMMDVTVTIKSSIDSEPALVLGPLKSAQELRREQQLAEIETRRQEREKNGKEEGEEGRARPPGQEMVDELQGPFSYDFSYWARSGEKITVTPSSKELLFYPPSMEATVSGESCPGKLIEIHGKAGLFLEGQIHPELEGVEIVISEKGASSPLITVFTDDKGAYSVGPLHSDLEYTVNSQKEGYVLTAVEGTVGDFKAYALAGVSFEIKAEDDQPLPGVLLSLSGGVFRSNLLTQDNGILTFSNLSPGQYYFKPMMKEFRFEPSSQMIEVQEGQNLRITITGFRTAYSCYGTVSSLNGEPEQGVAVEAVGQKDCSIYGEDTVTDEEGKFRLRGLLPGCMYHVQLKAEGNDHIERALPHHRVIEVGNNDVDDVNIIVFRQINQFDLSGNVITSSEYLSTLWVKLYKSESLDNPIQTVSLGQSLFFHFPPLLRDGENYVVLLDTTLPRSQYDYVLPQVSFTAVGYHKHITLVFSPTRKLPEQDIAQGSYIALPLTLLLLLAGYNHDKLIPLLLQLTSRLQGVRALGQAASDSSGPEDMKRQTKKQKTRRT.

A signal peptide spans 1-23 (MRAGRCAAALLLLLLSGAGRAIG). Over 24–1150 (SEDIVVGCGG…RKLPEQDIAQ (1127 aa)) the chain is Extracellular. N-linked (GlcNAc...) asparagine glycans are attached at residues Asn42, Asn210, and Asn610. A coiled-coil region spans residues 692–720 (KSAQELRREQQLAEIETRRQEREKNGKEE). Residues 708 to 726 (TRRQEREKNGKEEGEEGRA) show a composition bias toward basic and acidic residues. A disordered region spans residues 708–733 (TRRQEREKNGKEEGEEGRARPPGQEM). The helical transmembrane segment at 1151 to 1167 (GSYIALPLTLLLLLAGY) threads the bilayer. The Cytoplasmic portion of the chain corresponds to 1168–1214 (NHDKLIPLLLQLTSRLQGVRALGQAASDSSGPEDMKRQTKKQKTRRT). Residues 1190–1214 (GQAASDSSGPEDMKRQTKKQKTRRT) form a disordered region. Phosphoserine is present on residues Ser1196 and Ser1197. A compositionally biased stretch (basic residues) spans 1205-1214 (QTKKQKTRRT).

As to quaternary structure, component of the back of Sec61 (BOS) complex, composed of NCLN/Nicalin, NOMO (NOMO1, NOMO2 or NOMO3) and TMEM147. The BOS complex is part of the multi-pass translocon (MPT) complex, composed of three subcomplexes, the GEL complex (composed of RAB5IF/OPTI and TMCO1), the BOS complex (composed of NCLN/Nicalin, NOMO and TMEM147) and the PAT complex (composed of WDR83OS/Asterix and CCDC47). The MPT complex associates with the SEC61 complex.

It is found in the endoplasmic reticulum membrane. Component of the multi-pass translocon (MPT) complex that mediates insertion of multi-pass membrane proteins into the lipid bilayer of membranes. The MPT complex takes over after the SEC61 complex: following membrane insertion of the first few transmembrane segments of proteins by the SEC61 complex, the MPT complex occludes the lateral gate of the SEC61 complex to promote insertion of subsequent transmembrane regions. This is BOS complex subunit NOMO1 from Mus musculus (Mouse).